Here is a 195-residue protein sequence, read N- to C-terminus: DnaJ homolog subfamily C member 5 (195 aa).

Positions 13-82 (GDSLYIVLGL…RNIYDKYGSL (70 aa)) constitute a J domain. The disordered stretch occupies residues 162-195 (DMEKEGDGAIVVQPTSATETTQLTSDSHPSYHTE). Polar residues predominate over residues 174–189 (QPTSATETTQLTSDSH).

In terms of processing, palmitoylated. Palmitoylation occurs probably in the cysteine-rich domain and regulates DNAJC5 stable membrane attachment.

The protein resides in the cytoplasm. The protein localises to the cytosol. It localises to the membrane. Its subcellular location is the cytoplasmic vesicle. It is found in the secretory vesicle. The protein resides in the chromaffin granule membrane. The protein localises to the melanosome. It localises to the cell membrane. May have an important role in presynaptic function. May be involved in calcium-dependent neurotransmitter release at nerve endings. The polypeptide is DnaJ homolog subfamily C member 5 (Tetronarce californica (Pacific electric ray)).